The chain runs to 717 residues: Copine family protein 5 (717 aa).

A C2 domain is found at 193–318 (YLGGIIVSAE…KYGPGSDNVY (126 aa)). Residues 377-567 (ELDQRRFDGE…LNKSRIAETA (191 aa)) enclose the VWFA domain.

It belongs to the copine family.

This is Copine family protein 5 (cpna-5) from Caenorhabditis elegans.